Here is a 378-residue protein sequence, read N- to C-terminus: Succinyl-diaminopimelate desuccinylase (378 aa).

A Zn(2+)-binding site is contributed by His77. Asp79 is a catalytic residue. Zn(2+) is bound at residue Asp108. Glu138 (proton acceptor) is an active-site residue. Zn(2+) contacts are provided by Glu139, Glu167, and His350.

It belongs to the peptidase M20A family. DapE subfamily. Homodimer. Zn(2+) is required as a cofactor. Co(2+) serves as cofactor.

It carries out the reaction N-succinyl-(2S,6S)-2,6-diaminopimelate + H2O = (2S,6S)-2,6-diaminopimelate + succinate. The protein operates within amino-acid biosynthesis; L-lysine biosynthesis via DAP pathway; LL-2,6-diaminopimelate from (S)-tetrahydrodipicolinate (succinylase route): step 3/3. Functionally, catalyzes the hydrolysis of N-succinyl-L,L-diaminopimelic acid (SDAP), forming succinate and LL-2,6-diaminopimelate (DAP), an intermediate involved in the bacterial biosynthesis of lysine and meso-diaminopimelic acid, an essential component of bacterial cell walls. This is Succinyl-diaminopimelate desuccinylase from Erythrobacter litoralis (strain HTCC2594).